Here is a 526-residue protein sequence, read N- to C-terminus: Probable fucosyltransferase 7 (526 aa).

Over methionine 1–lysine 4 the chain is Cytoplasmic. The chain crosses the membrane as a helical; Signal-anchor for type II membrane protein span at residues leucine 5–serine 25. Residues asparagine 26 to leucine 526 are Lumenal-facing. Residues asparagine 211, asparagine 215, and asparagine 363 are each glycosylated (N-linked (GlcNAc...) asparagine).

Belongs to the glycosyltransferase 37 family. Expressed in roots, leaves, stems and seedlings.

The protein resides in the golgi apparatus. Its subcellular location is the golgi stack membrane. Its pathway is protein modification; protein glycosylation. In terms of biological role, may be involved in cell wall biosynthesis. May act as a fucosyltransferase. The polypeptide is Probable fucosyltransferase 7 (FUT7) (Arabidopsis thaliana (Mouse-ear cress)).